Reading from the N-terminus, the 325-residue chain is DNA-directed RNA polymerase subunit alpha (325 aa).

Residues 1-231 form an alpha N-terminal domain (alpha-NTD) region; sequence MQTSLLKPKI…DQLSVFAALE (231 aa). An alpha C-terminal domain (alpha-CTD) region spans residues 246–325; that stretch reads IDPILLRPVD…ENWPPAGLDK (80 aa).

The protein belongs to the RNA polymerase alpha chain family. Homodimer. The RNAP catalytic core consists of 2 alpha, 1 beta, 1 beta' and 1 omega subunit. When a sigma factor is associated with the core the holoenzyme is formed, which can initiate transcription.

It carries out the reaction RNA(n) + a ribonucleoside 5'-triphosphate = RNA(n+1) + diphosphate. DNA-dependent RNA polymerase catalyzes the transcription of DNA into RNA using the four ribonucleoside triphosphates as substrates. The polypeptide is DNA-directed RNA polymerase subunit alpha (Paraburkholderia phytofirmans (strain DSM 17436 / LMG 22146 / PsJN) (Burkholderia phytofirmans)).